A 258-amino-acid chain; its full sequence is PHD finger protein ALFIN-LIKE 5 (258 aa).

A disordered region spans residues 143–205 (AKKQTKEKAP…EEEERDNTLC (63 aa)). Positions 152 to 165 (PNSTNKPNKPSSKM) are enriched in polar residues. Over residues 184 to 200 (DDDESGDEYADEEEEER) the composition is skewed to acidic residues. The PHD-type zinc finger occupies 202-254 (NTLCGSCGTNDGKDEFWICCDSCERWYHGKCVKITPARAEHIKHYKCPDCGNK).

Belongs to the Alfin family.

The protein resides in the nucleus. Functionally, histone-binding component that specifically recognizes H3 tails trimethylated on 'Lys-4' (H3K4me3), which mark transcription start sites of virtually all active genes. In Oryza sativa subsp. indica (Rice), this protein is PHD finger protein ALFIN-LIKE 5.